An 829-amino-acid polypeptide reads, in one-letter code: Sodium/hydrogen exchanger 3 (829 aa).

The signal sequence occupies residues 1–26; that stretch reads MWHRALGPGWKLLLALALTSLQGARG. At 27-46 the chain is on the extracellular side; it reads AEEEPSSDGSFQVVTFKWHH. The chain crosses the membrane as a helical span at residues 47–69; it reads VQDPYIIALWILVASLAKIVFHL. The Cytoplasmic segment spans residues 70–77; the sequence is SHKVTSIV. Residues 78 to 97 form a helical membrane-spanning segment; sequence PESALLIVLGLVLGGIVWAA. The Extracellular segment spans residues 98 to 106; sequence DHIASFTLT. Residues 107-124 form a helical membrane-spanning segment; sequence PTLFFFYLLPPIVLDAGY. Residues 125 to 127 lie on the Cytoplasmic side of the membrane; the sequence is FMP. Residues 128 to 163 form a helical membrane-spanning segment; it reads NRLFFGNLGTILLYAVIGTIWNAATTGLSLYGVFLS. The a 1,2-diacyl-sn-glycero-3-phospho-(1D-myo-inositol) site is built by Gly133, Gly136, and Thr137. Topologically, residues 164-176 are extracellular; sequence GLMGELKIGLLDF. The helical transmembrane segment at 177–198 threads the bilayer; the sequence is LLFGSLIAAVDPVAVLAVFEEV. Residues 199-200 are Cytoplasmic-facing; it reads HV. A helical membrane pass occupies residues 201–232; that stretch reads NEVLFIIVFGESLLNDAVTVVLYNVFESFVTL. Residues 233–239 lie on the Extracellular side of the membrane; sequence GGDAVTG. A helical membrane pass occupies residues 240 to 274; that stretch reads VDCVKGIVSFFVVSLGGTLVGVIFAFLLSLVTRFT. At 275-276 the chain is on the cytoplasmic side; sequence KH. Residues 277-299 traverse the membrane as a helical segment; that stretch reads VRIIEPGFVFVISYLSYLTSEML. The Extracellular portion of the chain corresponds to 300 to 301; that stretch reads SL. A helical transmembrane segment spans residues 302 to 318; that stretch reads SSILAITFCGICCQKYV. Residues 319–325 lie on the Cytoplasmic side of the membrane; the sequence is KANISEQ. A helical membrane pass occupies residues 326–354; sequence SATTVRYTMKMLASGAETIIFMFLGISAV. Residues 355 to 362 are Extracellular-facing; sequence NPDIWTWN. A helical transmembrane segment spans residues 363–384; that stretch reads TAFVLLTLVFISVYRAIGVVLQ. The Cytoplasmic portion of the chain corresponds to 385–397; it reads TWILNRYRMVQLE. Residue Met393 participates in a 1,2-diacyl-sn-glycero-3-phospho-(1D-myo-inositol) binding. A helical membrane pass occupies residues 398–421; sequence TIDQVVMSYGGLRGAVAYALVVLL. The Extracellular segment spans residues 422-428; sequence DEKKVKE. A helical membrane pass occupies residues 429-462; the sequence is KNLFVSTTLIVVFFTVIFQGLTIKPLVQWLKVKR. Residues 463–829 lie on the Cytoplasmic side of the membrane; the sequence is SEHREPKLNE…QPAAPESTHM (367 aa). A 1,2-diacyl-sn-glycero-3-phospho-(1D-myo-inositol) is bound by residues Gln492, Ile493, and His495. Phosphoserine occurs at positions 550 and 558. The segment at 571–585 is interaction with EZR; that stretch reads RPSTVEASVSYFLRE. The tract at residues 586–663 is interaction with NHERF4; it reads NVSAVCLDMQ…RKRLESFKSA (78 aa). Residues 587 to 691 are interaction with AHCYL1; sequence VSAVCLDMQS…AQKRRNSSIP (105 aa). Phosphoserine occurs at positions 588 and 603. A Phosphoserine; by SGK1 modification is found at Ser659. Residues 677-687 are compositionally biased toward basic residues; that stretch reads YKRERAQKRRN. The segment at 677–696 is disordered; that stretch reads YKRERAQKRRNSSIPNGKLP. Residues Ser714, Ser805, and Ser808 each carry the phosphoserine modification.

This sequence belongs to the monovalent cation:proton antiporter 1 (CPA1) transporter (TC 2.A.36) family. Homodimer. Found in the forms of complex and dynamic macromolecular complexes. Binds NHERF1 and NHERF2. Interacts with CHP1; this interaction increases trafficking and activity of SLC9A3 at the plasma membrane. Interacts with CHP2 and SHANK2. Interacts with PDZK1 (via C-terminal PDZ domain). Interacts with NHERF4 and interactions decrease in response to elevated calcium ion levels. Interacts with AHCYL1; the interaction is required for SLC9A3 activity. Interacts with EZR; interaction targets SLC9A3 to the apical membrane. Interacts with SNX27 (via PDZ domains); directs SLC9A3 membrane insertion from early endosomes to the plasma membrane. In terms of processing, phosphorylated by PKA, which inhibits activity. Phosphorylation at Ser-659 by SGK1 is associated with increased abundance at the cell membrane. Phosphorylation at Ser-714 by CSNK2A1 regulates SLC9A3 activity through the formation of multiple signaling complexes.

It is found in the apical cell membrane. Its subcellular location is the cell membrane. It localises to the recycling endosome membrane. The protein resides in the early endosome membrane. It catalyses the reaction Na(+)(in) + H(+)(out) = Na(+)(out) + H(+)(in). Its activity is regulated as follows. Seems to switch between active and inactive modes in response to various stimuli. Activated directly or indirectly by membrane phosphatidylinositol (PIs). Regulated by a variety of auxiliary proteins, which facilitate the maturation, cell surface expression and function of the transporter. Inhibited specifically by the drug tenapanor. Its function is as follows. Plasma membrane Na(+)/H(+) antiporter. Exchanges intracellular H(+) ions for extracellular Na(+) in 1:1 stoichiometry, playing a key role in salt and fluid absorption and pH homeostasis. Major apical Na(+)/H(+) exchanger in kidney and intestine playing an important role in renal and intestine Na(+) absorption and blood pressure regulation. This Mus musculus (Mouse) protein is Sodium/hydrogen exchanger 3.